The following is a 484-amino-acid chain: Falcipain-2a (484 aa).

At 1 to 35 (MDYNMDYAPHEVISQQGERFVDKYVDRKILKNKKS) the chain is on the cytoplasmic side. Positions 1–243 (MDYNMDYAPH…PLKNSKYLLD (243 aa)) are cleaved as a propeptide — activation peptide. Positions 16-25 (QGERFVDKYV) match the Bipartite vacuolar targeting signal 1 motif. Residues 36–56 (LLVIISLSVLSVVGFVLFYFT) traverse the membrane as a helical; Signal-anchor for type II membrane protein segment. Topologically, residues 57-484 (PNSRKSDLFK…GTDAFIPLIE (428 aa)) are lumenal. Residue asparagine 67 is glycosylated (N-linked (GlcNAc...) asparagine). A Bipartite vacuolar targeting signal 2 motif is present at residues 84–105 (KSPNGKKFIVSKIDEALSFYDS). The short motif at 244–260 (QMNYEEVIKKYKGNENF) is the Nose motif; required for the correct folding of the mature form element. 4 disulfides stabilise this stretch: cysteine 282–cysteine 323, cysteine 316–cysteine 357, cysteine 342–cysteine 362, and cysteine 411–cysteine 472. Cysteine 285 is an active-site residue. Histidine 417 is a catalytic residue. Positions 428–437 (EIVNPLTKKG) match the Arm motif; binds to host hemoglobin and required for the inhibitory interaction between the propeptide and the catalytic domain motif. Asparagine 447 is an active-site residue.

The protein belongs to the peptidase C1 family. As to quaternary structure, component of the hemozoin formation complex (HFC) composed of falcipains FP2A and/or FP2B, plasmepsins PMII, PMIII/HAP and PMIV, heme detoxifying protein HDP and falcilysin FLN. The HFC complex is involved in hemoglobin degradation and detoxification of heme in the food vacuole during the asexual blood stage. Post-translationally, auto-cleaved to remove the propeptide.

It localises to the vacuole. Its subcellular location is the membrane. Inhibited by cysteine protease inhibitor ICP. Inhibited by heme and heme analogs. Functionally, cysteine protease which cleaves native host hemoglobin and globin in the food vacuole during the asexual blood stage. The binding to host hemoglobin is pH-sensitive and only occurs at acidic pH. Cleaves ankyrin and protein 4.1, two components of host erythrocyte membrane cytoskeleton required for the stability of the erythrocyte membrane, and thus may be involved in parasite release. Preferentially cleaves substrates which have an arginine or lysine at the P1 position and a leucine or phenylalanine at the P2 position. The sequence is that of Falcipain-2a from Plasmodium falciparum (isolate 3D7).